An 860-amino-acid chain; its full sequence is Protein translocase subunit SecA (860 aa).

ATP is bound by residues Gln-87, 105 to 109 (GEGKT), and Asp-514. Positions 846, 848, 857, and 858 each coordinate Zn(2+).

The protein belongs to the SecA family. As to quaternary structure, monomer and homodimer. Part of the essential Sec protein translocation apparatus which comprises SecA, SecYEG and auxiliary proteins SecDF. Other proteins may also be involved. It depends on Zn(2+) as a cofactor.

It localises to the cell membrane. The protein resides in the cytoplasm. It carries out the reaction ATP + H2O + cellular proteinSide 1 = ADP + phosphate + cellular proteinSide 2.. In terms of biological role, part of the Sec protein translocase complex. Interacts with the SecYEG preprotein conducting channel. Has a central role in coupling the hydrolysis of ATP to the transfer of proteins into and across the cell membrane, serving as an ATP-driven molecular motor driving the stepwise translocation of polypeptide chains across the membrane. This chain is Protein translocase subunit SecA, found in Endomicrobium trichonymphae.